The primary structure comprises 167 residues: NAD(P)H-quinone oxidoreductase subunit I, chloroplastic (167 aa).

4Fe-4S ferredoxin-type domains lie at 55–84 and 95–124; these read GRIH…VDWK and LNYS…MTEE. Residues Cys64, Cys67, Cys70, Cys74, Cys104, Cys107, Cys110, and Cys114 each contribute to the [4Fe-4S] cluster site.

This sequence belongs to the complex I 23 kDa subunit family. NDH is composed of at least 16 different subunits, 5 of which are encoded in the nucleus. The cofactor is [4Fe-4S] cluster.

Its subcellular location is the plastid. It localises to the chloroplast thylakoid membrane. It carries out the reaction a plastoquinone + NADH + (n+1) H(+)(in) = a plastoquinol + NAD(+) + n H(+)(out). The enzyme catalyses a plastoquinone + NADPH + (n+1) H(+)(in) = a plastoquinol + NADP(+) + n H(+)(out). In terms of biological role, NDH shuttles electrons from NAD(P)H:plastoquinone, via FMN and iron-sulfur (Fe-S) centers, to quinones in the photosynthetic chain and possibly in a chloroplast respiratory chain. The immediate electron acceptor for the enzyme in this species is believed to be plastoquinone. Couples the redox reaction to proton translocation, and thus conserves the redox energy in a proton gradient. The polypeptide is NAD(P)H-quinone oxidoreductase subunit I, chloroplastic (Arabis hirsuta (Hairy rock-cress)).